Reading from the N-terminus, the 126-residue chain is Probable DNA-directed RNA polymerase II subunit RPB11 (126 aa).

Belongs to the archaeal Rpo11/eukaryotic RPB11/RPC19 RNA polymerase subunit family. As to quaternary structure, component of the RNA polymerase II (Pol II) complex consisting of 12 subunits.

It localises to the nucleus. In terms of biological role, DNA-dependent RNA polymerase catalyzes the transcription of DNA into RNA using the four ribonucleoside triphosphates as substrates. Component of RNA polymerase II which synthesizes mRNA precursors and many functional non-coding RNAs. Pol II is the central component of the basal RNA polymerase II transcription machinery. It is composed of mobile elements that move relative to each other. RPB11 is part of the core element with the central large cleft. The protein is Probable DNA-directed RNA polymerase II subunit RPB11 of Plasmodium falciparum (isolate 3D7).